The primary structure comprises 502 residues: Probable cytosol aminopeptidase (502 aa).

Lys265 and Asp270 together coordinate Mn(2+). Residue Lys277 is part of the active site. The Mn(2+) site is built by Asp288, Asp347, and Glu349. Residue Arg351 is part of the active site.

This sequence belongs to the peptidase M17 family. The cofactor is Mn(2+).

The protein localises to the cytoplasm. It catalyses the reaction Release of an N-terminal amino acid, Xaa-|-Yaa-, in which Xaa is preferably Leu, but may be other amino acids including Pro although not Arg or Lys, and Yaa may be Pro. Amino acid amides and methyl esters are also readily hydrolyzed, but rates on arylamides are exceedingly low.. The catalysed reaction is Release of an N-terminal amino acid, preferentially leucine, but not glutamic or aspartic acids.. In terms of biological role, presumably involved in the processing and regular turnover of intracellular proteins. Catalyzes the removal of unsubstituted N-terminal amino acids from various peptides. In Rickettsia bellii (strain OSU 85-389), this protein is Probable cytosol aminopeptidase.